Reading from the N-terminus, the 447-residue chain is Elongation factor 1-alpha (447 aa).

The tr-type G domain occupies K5–S230. The segment at G14–S21 is G1. G14–S21 is a GTP binding site. Position 55 is an N6,N6-dimethyllysine (K55). Positions G70–D74 are G2. Residue K79 is modified to N6,N6,N6-trimethyllysine. The G3 stretch occupies residues D91–G94. Residues D91–H95 and N153–D156 contribute to the GTP site. A G4 region spans residues N153–D156. K187 is modified (N6,N6,N6-trimethyllysine). Positions S194–F196 are G5. K261 is modified (N6-methyllysine). E289 is modified (5-glutamyl glycerylphosphorylethanolamine). N6,N6,N6-trimethyllysine is present on K306. Position 362 is a 5-glutamyl glycerylphosphorylethanolamine (E362). The residue at position 396 (K396) is an N6,N6,N6-trimethyllysine.

Belongs to the TRAFAC class translation factor GTPase superfamily. Classic translation factor GTPase family. EF-Tu/EF-1A subfamily.

The protein resides in the cytoplasm. Its function is as follows. This protein promotes the GTP-dependent binding of aminoacyl-tRNA to the A-site of ribosomes during protein biosynthesis. The protein is Elongation factor 1-alpha (REFA1) of Oryza sativa subsp. japonica (Rice).